The following is a 783-amino-acid chain: Endonuclease MutS2 (783 aa).

Residue 333–340 participates in ATP binding; sequence GPNTGGKT. In terms of domain architecture, Smr spans 708-783; it reads IDLRGKNIEE…GLGATFIYLK (76 aa).

This sequence belongs to the DNA mismatch repair MutS family. MutS2 subfamily. Homodimer. Binds to stalled ribosomes, contacting rRNA.

Its function is as follows. Endonuclease that is involved in the suppression of homologous recombination and thus may have a key role in the control of bacterial genetic diversity. Acts as a ribosome collision sensor, splitting the ribosome into its 2 subunits. Detects stalled/collided 70S ribosomes which it binds and splits by an ATP-hydrolysis driven conformational change. Acts upstream of the ribosome quality control system (RQC), a ribosome-associated complex that mediates the extraction of incompletely synthesized nascent chains from stalled ribosomes and their subsequent degradation. Probably generates substrates for RQC. The polypeptide is Endonuclease MutS2 (Finegoldia magna (strain ATCC 29328 / DSM 20472 / WAL 2508) (Peptostreptococcus magnus)).